Reading from the N-terminus, the 106-residue chain is Small ribosomal subunit protein uS10 (106 aa).

It belongs to the universal ribosomal protein uS10 family. Part of the 30S ribosomal subunit.

Its function is as follows. Involved in the binding of tRNA to the ribosomes. This chain is Small ribosomal subunit protein uS10, found in Wolbachia sp. subsp. Drosophila simulans (strain wRi).